A 354-amino-acid polypeptide reads, in one-letter code: Methionine import ATP-binding protein MetN (354 aa).

The ABC transporter domain maps to 8–250 (LDHIDITFRQ…PKEALTQEFI (243 aa)). Residue 42-49 (GYSGAGKS) coordinates ATP.

Belongs to the ABC transporter superfamily. Methionine importer (TC 3.A.1.24) family. As to quaternary structure, the complex is composed of two ATP-binding proteins (MetN), two transmembrane proteins (MetI) and a solute-binding protein (MetQ).

The protein resides in the cell membrane. The catalysed reaction is L-methionine(out) + ATP + H2O = L-methionine(in) + ADP + phosphate + H(+). It catalyses the reaction D-methionine(out) + ATP + H2O = D-methionine(in) + ADP + phosphate + H(+). In terms of biological role, part of the ABC transporter complex MetNIQ involved in methionine import. Responsible for energy coupling to the transport system. This chain is Methionine import ATP-binding protein MetN, found in Streptococcus pyogenes serotype M1.